Reading from the N-terminus, the 101-residue chain is Small ribosomal subunit protein uS10 (101 aa).

It belongs to the universal ribosomal protein uS10 family. In terms of assembly, part of the 30S ribosomal subunit.

Its function is as follows. Involved in the binding of tRNA to the ribosomes. In Flavobacterium johnsoniae (strain ATCC 17061 / DSM 2064 / JCM 8514 / BCRC 14874 / CCUG 350202 / NBRC 14942 / NCIMB 11054 / UW101) (Cytophaga johnsonae), this protein is Small ribosomal subunit protein uS10.